The primary structure comprises 408 residues: NADH-quinone oxidoreductase subunit H (408 aa).

9 consecutive transmembrane segments (helical) span residues 18 to 38, 84 to 104, 124 to 144, 165 to 185, 198 to 218, 261 to 281, 288 to 308, 321 to 341, and 353 to 373; these read LAKA…AILI, PIYL…FSVI, LPVA…GIVL, VVSY…YAGT, TWFV…MVGE, SALA…FNLI, WWPL…YFWL, MALG…VVAI, and WAAW…WGLA. The segment at 381 to 408 is disordered; sequence VQPPPPQSTGAYPVPPLPSVGTKETADA. Positions 382 to 398 are enriched in pro residues; it reads QPPPPQSTGAYPVPPLP.

It belongs to the complex I subunit 1 family. NDH-1 is composed of 14 different subunits. Subunits NuoA, H, J, K, L, M, N constitute the membrane sector of the complex.

The protein localises to the cell membrane. It carries out the reaction a quinone + NADH + 5 H(+)(in) = a quinol + NAD(+) + 4 H(+)(out). Its function is as follows. NDH-1 shuttles electrons from NADH, via FMN and iron-sulfur (Fe-S) centers, to quinones in the respiratory chain. The immediate electron acceptor for the enzyme in this species is believed to be menaquinone. Couples the redox reaction to proton translocation (for every two electrons transferred, four hydrogen ions are translocated across the cytoplasmic membrane), and thus conserves the redox energy in a proton gradient. This subunit may bind ubiquinone. The sequence is that of NADH-quinone oxidoreductase subunit H from Mycolicibacterium smegmatis (strain ATCC 700084 / mc(2)155) (Mycobacterium smegmatis).